The primary structure comprises 76 residues: Translational regulator CsrA (76 aa).

This sequence belongs to the CsrA/RsmA family. In terms of assembly, homodimer; the beta-strands of each monomer intercalate to form a hydrophobic core, while the alpha-helices form wings that extend away from the core.

Its subcellular location is the cytoplasm. A translational regulator that binds mRNA to regulate translation initiation and/or mRNA stability. Usually binds in the 5'-UTR at or near the Shine-Dalgarno sequence preventing ribosome-binding, thus repressing translation. Its main target seems to be the major flagellin gene, while its function is anatagonized by FliW. This is Translational regulator CsrA from Wolinella succinogenes (strain ATCC 29543 / DSM 1740 / CCUG 13145 / JCM 31913 / LMG 7466 / NCTC 11488 / FDC 602W) (Vibrio succinogenes).